A 629-amino-acid chain; its full sequence is tRNA uridine 5-carboxymethylaminomethyl modification enzyme MnmG (629 aa).

FAD-binding positions include 13–18 (GGGHAG), Val-125, and Ser-180. An NAD(+)-binding site is contributed by 273 to 287 (GPRYCPSIEDKVMRF). Gln-370 provides a ligand contact to FAD.

The protein belongs to the MnmG family. As to quaternary structure, homodimer. Heterotetramer of two MnmE and two MnmG subunits. FAD is required as a cofactor.

The protein resides in the cytoplasm. Functionally, NAD-binding protein involved in the addition of a carboxymethylaminomethyl (cmnm) group at the wobble position (U34) of certain tRNAs, forming tRNA-cmnm(5)s(2)U34. The sequence is that of tRNA uridine 5-carboxymethylaminomethyl modification enzyme MnmG from Aliivibrio fischeri (strain ATCC 700601 / ES114) (Vibrio fischeri).